The sequence spans 248 residues: Mannose-binding protein C (248 aa).

The signal sequence occupies residues 1–20 (MSPFLSLPLLLLSVLSASYS). A disordered region spans residues 36 to 112 (IACSSPGING…GDSSLAASER (77 aa)). A Collagen-like domain is found at 42–99 (GINGFPGKDGRDGTKGEKGEPGQGLRGLQGPPGKLGPPGNPGPSGSPGAKGQKGDPGA). At Pro47 the chain carries 4-hydroxyproline. Residues 49–61 (KDGRDGTKGEKGE) show a composition bias toward basic and acidic residues. A 4-hydroxyproline mark is found at Pro73, Pro79, Pro82, and Pro88. Residues 112–130 (RKALQTEMARIKKWVTFSL) are a coiled coil. One can recognise a C-type lectin domain in the interval 134–245 (VGKKLFLSNG…CSSSHLAICE (112 aa)). 2 disulfide bridges follow: Cys155–Cys244 and Cys222–Cys236.

Oligomeric complex of 3 or more homotrimers. Interacts with MASP1 and MASP2. Interacts with MEP1A and MEP1B and may inhibit their catalytic activity. In terms of processing, hydroxylation on proline residues within the sequence motif, GXPG, is most likely to be 4-hydroxy as this fits the requirement for 4-hydroxylation in vertebrates.

It localises to the secreted. Calcium-dependent lectin involved in innate immune defense. Binds mannose, fucose and N-acetylglucosamine on different microorganisms and activates the lectin complement pathway. Binds to late apoptotic cells, as well as to apoptotic blebs and to necrotic cells, but not to early apoptotic cells, facilitating their uptake by macrophages. The protein is Mannose-binding protein C (MBL2) of Saguinus oedipus (Cotton-top tamarin).